We begin with the raw amino-acid sequence, 338 residues long: Phenylalanine--tRNA ligase alpha subunit (338 aa).

Glu-253 is a binding site for Mg(2+).

The protein belongs to the class-II aminoacyl-tRNA synthetase family. Phe-tRNA synthetase alpha subunit type 1 subfamily. Tetramer of two alpha and two beta subunits. Requires Mg(2+) as cofactor.

Its subcellular location is the cytoplasm. It carries out the reaction tRNA(Phe) + L-phenylalanine + ATP = L-phenylalanyl-tRNA(Phe) + AMP + diphosphate + H(+). This Citrifermentans bemidjiense (strain ATCC BAA-1014 / DSM 16622 / JCM 12645 / Bem) (Geobacter bemidjiensis) protein is Phenylalanine--tRNA ligase alpha subunit.